The sequence spans 269 residues: 2' cyclic ADP-D-ribose synthase AbTIR (269 aa).

Residues 31–99 (LKTKLSEISR…KQQKDEIEHQ (69 aa)) adopt a coiled-coil conformation. In terms of domain architecture, TIR spans 133-266 (PEYDLFISHA…EIAHQLADVI (134 aa)). The NAD(+) site is built by S143, K172, and K202. Residue E208 is part of the active site. K245 serves as a coordination point for NAD(+).

Homodimer. In the presence of NAD(+) analog 8-amino-isoquinoline adenine dinucleotide (3AD) forms filaments with 3AD between monomers; conformational changes occur upon 3AD binding.

The enzyme catalyses NAD(+) = 2'cADPR + nicotinamide + H(+). It carries out the reaction NAD(+) + H2O = ADP-D-ribose + nicotinamide + H(+). The catalysed reaction is NADP(+) + H2O = ADP-D-ribose 2'-phosphate + nicotinamide + H(+). In terms of biological role, NAD(+) hydrolase (NADase) that catalyzes cleavage of NAD(+) into ADP-D-ribose (ADPR) and nicotinamide. In addition to ADPR, also generates a cyclization variant of cyclic ADPR (cADPR), termed 2'cADPR (v-cADPR). Cleaves NADP(+), but does not cyclize the product. This is 2' cyclic ADP-D-ribose synthase AbTIR from Acinetobacter baumannii (strain 1295743).